Reading from the N-terminus, the 529-residue chain is Endoglucanase 21 (529 aa).

The first 24 residues, 1-24, serve as a signal peptide directing secretion; it reads MVAAMTMCAAVAVLLVLTSTMAAA. The active-site Nucleophile is the Asp89. N-linked (GlcNAc...) asparagine glycosylation is present at Asn342. Residues His429, Asp481, and Glu490 contribute to the active site.

This sequence belongs to the glycosyl hydrolase 9 (cellulase E) family. Expressed in roots and flowers.

It is found in the secreted. It catalyses the reaction Endohydrolysis of (1-&gt;4)-beta-D-glucosidic linkages in cellulose, lichenin and cereal beta-D-glucans.. The chain is Endoglucanase 21 (GLU9) from Oryza sativa subsp. japonica (Rice).